Reading from the N-terminus, the 310-residue chain is Putative S-adenosyl-L-methionine-dependent methyltransferase MSMEG_1888/MSMEI_1848 (310 aa).

S-adenosyl-L-methionine-binding positions include Asp-128 and 157–158; that span reads DL.

This sequence belongs to the UPF0677 family.

In terms of biological role, exhibits S-adenosyl-L-methionine-dependent methyltransferase activity. This is Putative S-adenosyl-L-methionine-dependent methyltransferase MSMEG_1888/MSMEI_1848 from Mycolicibacterium smegmatis (strain ATCC 700084 / mc(2)155) (Mycobacterium smegmatis).